The primary structure comprises 729 residues: Phosphoribosylformylglycinamidine synthase subunit PurL (729 aa).

His-54 is a catalytic residue. 2 residues coordinate ATP: Tyr-57 and Lys-96. Mg(2+) is bound at residue Glu-98. Substrate contacts are provided by residues 99 to 102 (SHNH) and Arg-121. The active-site Proton acceptor is His-100. Residue Asp-122 coordinates Mg(2+). Gln-245 serves as a coordination point for substrate. Residue Asp-273 coordinates Mg(2+). Substrate is bound at residue 317-319 (ETQ). Asp-495 and Gly-532 together coordinate ATP. A Mg(2+)-binding site is contributed by Asn-533. Ser-535 serves as a coordination point for substrate.

It belongs to the FGAMS family. Monomer. Part of the FGAM synthase complex composed of 1 PurL, 1 PurQ and 2 PurS subunits.

It localises to the cytoplasm. The enzyme catalyses N(2)-formyl-N(1)-(5-phospho-beta-D-ribosyl)glycinamide + L-glutamine + ATP + H2O = 2-formamido-N(1)-(5-O-phospho-beta-D-ribosyl)acetamidine + L-glutamate + ADP + phosphate + H(+). It functions in the pathway purine metabolism; IMP biosynthesis via de novo pathway; 5-amino-1-(5-phospho-D-ribosyl)imidazole from N(2)-formyl-N(1)-(5-phospho-D-ribosyl)glycinamide: step 1/2. Its function is as follows. Part of the phosphoribosylformylglycinamidine synthase complex involved in the purines biosynthetic pathway. Catalyzes the ATP-dependent conversion of formylglycinamide ribonucleotide (FGAR) and glutamine to yield formylglycinamidine ribonucleotide (FGAM) and glutamate. The FGAM synthase complex is composed of three subunits. PurQ produces an ammonia molecule by converting glutamine to glutamate. PurL transfers the ammonia molecule to FGAR to form FGAM in an ATP-dependent manner. PurS interacts with PurQ and PurL and is thought to assist in the transfer of the ammonia molecule from PurQ to PurL. The protein is Phosphoribosylformylglycinamidine synthase subunit PurL of Staphylococcus carnosus (strain TM300).